A 457-amino-acid polypeptide reads, in one-letter code: Secreted RxLR effector protein 8 (457 aa).

The signal sequence occupies residues 1–19 (MRGTLATALLLVISSRVAT). The short motif at 48 to 69 (RFLRGSRKQRDDLAPTAADENR) is the RxLR-dEER element. The N-linked (GlcNAc...) asparagine glycan is linked to Asn68. 2 disordered regions span residues 110–188 (RLSL…ALKS) and 398–457 (RQTI…RSSS). The span at 135–152 (SASTSTTSDIATSSSRTS) shows a compositional bias: low complexity. Composition is skewed to polar residues over residues 153 to 163 (NQRTPKTQASL) and 176 to 187 (SKNQFKKSTALK). The span at 442 to 457 (IKSKDHARKKRPRSSS) shows a compositional bias: basic residues.

The protein belongs to the RxLR effector family.

Its subcellular location is the secreted. It localises to the host nucleus. Its function is as follows. Secreted effector that completely suppresses the host cell death induced by cell death-inducing proteins. The chain is Secreted RxLR effector protein 8 from Plasmopara viticola (Downy mildew of grapevine).